The following is a 493-amino-acid chain: Cyclin-dependent kinase-like 2 (493 aa).

Residues 4–287 (YENLGLVGEG…CAELLHHDFF (284 aa)) enclose the Protein kinase domain. ATP contacts are provided by residues 10–18 (VGEGSYGMV) and K33. The short motif at 45 to 51 (KKIAMRE) is the [NKR]KIAxRE element. D126 (proton acceptor) is an active-site residue. 2 disordered regions span residues 311 to 338 (VSLS…KTLV) and 363 to 384 (GEKA…SRTS). Residues 320–336 (RKKEKEKDDSLGEERKT) show a composition bias toward basic and acidic residues.

This sequence belongs to the protein kinase superfamily. CMGC Ser/Thr protein kinase family. CDC2/CDKX subfamily.

It is found in the cytoplasm. It localises to the nucleus. It catalyses the reaction L-seryl-[protein] + ATP = O-phospho-L-seryl-[protein] + ADP + H(+). The enzyme catalyses L-threonyl-[protein] + ATP = O-phospho-L-threonyl-[protein] + ADP + H(+). This chain is Cyclin-dependent kinase-like 2, found in Pongo abelii (Sumatran orangutan).